We begin with the raw amino-acid sequence, 318 residues long: Retinol dehydrogenase 5 (318 aa).

The chain crosses the membrane as a helical span at residues 1 to 21 (MWLPLLLGALLWAVLWLLRDR). At 22–288 (QSLPASNAFV…TRYSPGWDAK (267 aa)) the chain is on the lumenal side. 32-56 (FITGCDSGFGRLLALQLDQRGFRVL) contacts NADP(+). The N-linked (GlcNAc...) asparagine glycan is linked to Asn160. Ser163 is a binding site for substrate. The active-site Proton acceptor is the Tyr175. The chain crosses the membrane as a helical span at residues 289–309 (LLWLPASYLPASLVDAVLTWV). Topologically, residues 310 to 318 (LPKPAQAVY) are cytoplasmic.

Belongs to the short-chain dehydrogenases/reductases (SDR) family. As to quaternary structure, homodimer. As to expression, widely expressed. In the eye, abundant in the retinal pigment epithelium.

It is found in the endoplasmic reticulum membrane. The enzyme catalyses 11-cis-retinol + NAD(+) = 11-cis-retinal + NADH + H(+). It catalyses the reaction 9-cis-retinol + NAD(+) = 9-cis-retinal + NADH + H(+). It carries out the reaction 13-cis-retinol + NAD(+) = 13-cis-retinal + NADH + H(+). The catalysed reaction is androsterone + NAD(+) = 5alpha-androstan-3,17-dione + NADH + H(+). The enzyme catalyses 5alpha-androstane-3alpha,17beta-diol + NAD(+) = 17beta-hydroxy-5alpha-androstan-3-one + NADH + H(+). It functions in the pathway cofactor metabolism; retinol metabolism. With respect to regulation, inhibited by 9-cis-, 13-cis- and all-trans-retinoic acids, with the most potent inhibitor being 13-cis-retinoic acid. Weakly inhibited by oleic acid. In terms of biological role, catalyzes the oxidation of cis-isomers of retinol, including 11-cis-, 9-cis-, and 13-cis-retinol in an NAD-dependent manner. Has no activity towards all-trans retinal. Plays a significant role in 11-cis retinol oxidation in the retinal pigment epithelium cells (RPE). Also recognizes steroids (androsterone, androstanediol) as its substrates. This is Retinol dehydrogenase 5 from Homo sapiens (Human).